The primary structure comprises 778 residues: Preasperterpenoid A synthase PvPS (778 aa).

The segment at 1-414 (MAATKKSTAT…HRYNFHKPAA (414 aa)) is terpene cyclase. 2 residues coordinate Mg(2+): aspartate 176 and aspartate 180. Substrate is bound at residue aspartate 176. Residues 176–180 (DDILD) carry the DDXXD 1 motif. Substrate-binding positions include 266 to 269 (RVIN), asparagine 310, 314 to 318 (SWEKE), and 406 to 407 (RY). The NSE/DTE motif lies at 310-318 (NDYFSWEKE). A compositionally biased stretch (basic and acidic residues) spans 414–431 (AKENEDTDDEGAKSDDSK). The interval 415–778 (KENEDTDDEG…LRLLLKRLQV (364 aa)) is prenyltransferase. A disordered region spans residues 416 to 454 (ENEDTDDEGAKSDDSKTTLNDSTDSTVVDVKTPATSGLL). Residues lysine 499, arginine 502, and histidine 531 each contribute to the isopentenyl diphosphate site. Mg(2+) is bound by residues aspartate 538 and aspartate 542. Residues 538-542 (DDIED) carry the DDXXD 2 motif. Arginine 547 contributes to the dimethylallyl diphosphate binding site. Arginine 548 serves as a coordination point for isopentenyl diphosphate. Dimethylallyl diphosphate is bound by residues lysine 625, threonine 626, glutamine 662, asparagine 669, lysine 679, and lysine 689.

In the N-terminal section; belongs to the terpene synthase family. The protein in the C-terminal section; belongs to the FPP/GGPP synthase family. As to quaternary structure, hexamer. It depends on Mg(2+) as a cofactor.

The catalysed reaction is isopentenyl diphosphate + (2E,6E)-farnesyl diphosphate = (2E,6E,10E)-geranylgeranyl diphosphate + diphosphate. It carries out the reaction isopentenyl diphosphate + (2E,6E,10E)-geranylgeranyl diphosphate = (2E,6E,10E,14E)-geranylfarnesyl diphosphate + diphosphate. The enzyme catalyses (2E,6E,10E,14E)-geranylfarnesyl diphosphate = preasperterpenoid A + diphosphate. Its pathway is secondary metabolite biosynthesis; terpenoid biosynthesis. Bifunctional sesterterpene synthase that possesses both prenyl transferase and terpene cyclase activity, converting isopentenyl diphosphate and dimethylallyl diphosphate into geranylfarnesyl diphosphate (GFPP) and further converting GFPP into preasperterpenoid A. This Talaromyces verruculosus (Penicillium verruculosum) protein is Preasperterpenoid A synthase PvPS.